The sequence spans 142 residues: ATP synthase epsilon chain (142 aa).

The protein belongs to the ATPase epsilon chain family. F-type ATPases have 2 components, CF(1) - the catalytic core - and CF(0) - the membrane proton channel. CF(1) has five subunits: alpha(3), beta(3), gamma(1), delta(1), epsilon(1). CF(0) has three main subunits: a, b and c.

It is found in the cell inner membrane. Its function is as follows. Produces ATP from ADP in the presence of a proton gradient across the membrane. The polypeptide is ATP synthase epsilon chain (Shewanella baltica (strain OS155 / ATCC BAA-1091)).